The chain runs to 406 residues: MSSIIHGAGAATTTLSTFNSVDSKKLFVAPSRTNLSVRSQRYIVAGSDASKKSFGSGLRVRHSQKLIPNAVATKEADTSASTGHELLLFEALQEGLEEEMDRDPHVCVMGEDVGHYGGSYKVTKGLADKFGDLRVLDTPICENAFTGMGIGAAMTGLRPVIEGMNMGFLLLAFNQISNNCGMLHYTSGGQFTIPVVIRGPGGVGRQLGAEHSQRLESYFQSIPGIQMVACSTPYNAKGLMKAAIRSENPVILFEHVLLYNLKEKIPDEDYVCNLEEAEMVRPGEHITILTYSRMRYHVMQAAKTLVNKGYDPEVIDIRSLKPFDLHTIGNSVKKTHRVLIVEECMRTGGIGASLTAAINENFHDYLDAPVMCLSSQDVPTPYAGTLEEWTVVQPAQIVTAVEQLCQ.

Residues 1-44 constitute a chloroplast transit peptide; that stretch reads MSSIIHGAGAATTTLSTFNSVDSKKLFVAPSRTNLSVRSQRYIV. Residue Glu-142 participates in thiamine diphosphate binding. Val-195, Ala-243, Ile-244, and Asn-248 together coordinate K(+).

In terms of assembly, tetramer of 2 alpha and 2 beta subunits. The cofactor is thiamine diphosphate.

The protein resides in the plastid. It is found in the chloroplast. The catalysed reaction is N(6)-[(R)-lipoyl]-L-lysyl-[protein] + pyruvate + H(+) = N(6)-[(R)-S(8)-acetyldihydrolipoyl]-L-lysyl-[protein] + CO2. Functionally, the pyruvate dehydrogenase complex catalyzes the overall conversion of pyruvate to acetyl-CoA and CO(2). It contains multiple copies of three enzymatic components: pyruvate dehydrogenase (E1), dihydrolipoamide acetyltransferase (E2) and lipoamide dehydrogenase (E3). In Arabidopsis thaliana (Mouse-ear cress), this protein is Pyruvate dehydrogenase E1 component subunit beta-2, chloroplastic (PDH-E1 BETA).